Here is an 819-residue protein sequence, read N- to C-terminus: MDEHYQAIQIEAEAQAYWEQHQSFRASEDPSKEKFYCLSMFPYPSGRLHMGHVRNYTIGDVISRYQRMRGRNVLQPMGWDAFGLPAENAAIQNRVPPAQWTYENIDHMRRQLKRLGFAYDWSRELATCQPDYYRWEQWLFTKLFAKGLVYKKTALVNWDPVDQTVLANEQVIDGRGWRSGALVERREIPQWFLKITAYGEELLTALDGLTGWPEQVRAMQRNWIGRSEGIEVQFHVEGKEALAVFTTRPDTLMGVTFVSVAAEHPLAREAATSNPALAAFLEQCQRTATSEAILETLEKEGMDTGFKAIHPITGEAVPIWVANFVLMGYGTGAVMAVPAHDQRDYEFAKVYGLPIQQVIAPKDDQASCNLEQSAFVEKGLLINSGDFTGLDFDQAFAAIAEHLERGGKGQRRVNYRLRDWGVSRQRYWGAPIPIVHCLHCGAIPVPEEDLPVVLPERVRFDGIRSPLKQLPEFYQTSCPQCGGQAKRETDTFDTFFESSWYYARYCCPDNNATMVDERGDYWLPVDQYIGGIEHAVLHLLYARFFHKVMRDMGLVRSDEPFTHLLTQGMVLKDGAKMSKSKGNTVDPQALIEHYGADTARLFIMFAAPPEQSLEWSESGVEGAHRFLKRLWRIVAAHVEQDPKAALTLKVKDLNSEQKSFRAKVHETIAKASDDIGRRYTFNTAIAAIMELMNALAKFDDSSPQGQAIRQEALEAVVLLLSPITPHICHRLWQELGHREAIIGVPWPEADPDALAKESIELVVQVNGKRRGQITVAVQAPREEIEGQAQAEPNVQRFIEGKTVQKVIIVPNRLVNLVVS.

The 'HIGH' region signature appears at 42 to 52; sequence PYPSGRLHMGH. Positions 576 to 580 match the 'KMSKS' region motif; that stretch reads KMSKS. Residue K579 coordinates ATP.

This sequence belongs to the class-I aminoacyl-tRNA synthetase family.

The protein resides in the cytoplasm. The catalysed reaction is tRNA(Leu) + L-leucine + ATP = L-leucyl-tRNA(Leu) + AMP + diphosphate. The protein is Leucine--tRNA ligase of Nitrosococcus oceani (strain ATCC 19707 / BCRC 17464 / JCM 30415 / NCIMB 11848 / C-107).